We begin with the raw amino-acid sequence, 86 residues long: Insulin (86 aa).

Cystine bridges form between cysteine 7–cysteine 72, cysteine 19–cysteine 85, and cysteine 71–cysteine 76. A propeptide spans 33 to 63 (EAEDPQVGEVELGGGPGLGGLQPLALAGPQQ) (c peptide).

This sequence belongs to the insulin family. As to quaternary structure, heterodimer of a B chain and an A chain linked by two disulfide bonds.

It is found in the secreted. Functionally, insulin decreases blood glucose concentration. It increases cell permeability to monosaccharides, amino acids and fatty acids. It accelerates glycolysis, the pentose phosphate cycle, and glycogen synthesis in liver. This chain is Insulin (INS), found in Equus caballus (Horse).